Here is a 160-residue protein sequence, read N- to C-terminus: Cell cycle regulator of non-homologous end joining (160 aa).

Met1 carries the post-translational modification N-acetylmethionine. The KBM motif lies at 1-21; it reads METLKSDNKKRVLPSWMTAPG. Positions 78–152 are disordered; that stretch reads KPWEQPSLVA…EGKEEEDELK (75 aa). Over residues 99-109 the composition is skewed to low complexity; that stretch reads ESPHTSSPGSS. The XLM signature appears at 150-160; it reads ELKYVREIFFS.

In terms of assembly, interacts (via KBM motif) with XRCC5/Ku80 and XRCC6/Ku70 heterodimer. Interacts (via XLF motif) with TRIM28/KAP1, ATM, MRE11, NBN and RAD50. Interacts with splicing factor SF3B1. Interacts with ERCC6L2; this interaction is DNA independent.

Its subcellular location is the cytoplasm. The protein resides in the nucleus. It localises to the chromosome. Cell-cycle-specific regulator of classical non-homologous end joining (NHEJ) of DNA double-strand break (DSB) repair, which can act both as an activator or inhibitor of NHEJ, depending on the cell cycle phase. Acts as a regulator of DNA repair pathway choice by specifically inhibiting classical NHEJ during the S and G2 phases, thereby promoting error-free repair by homologous recombination during cell cycle phases when sister chromatids are present. Preferentially protects single-stranded overhangs at break sites by inhibiting classical NHEJ, thereby creating a local environment that favors homologous recombination. Acts via interaction with XRCC5/Ku80 and XRCC6/Ku70. In contrast, acts as an activator of NHEJ during G1 phase of the cell cycle: promotes classical NHEJ in G1 phase cells via multivalent interactions that increase the affinity of DNA damage response proteins for DSB-associated chromatin. Also involved in immunoglobulin V(D)J recombination. May also act as an indirect regulator of proteasome. This chain is Cell cycle regulator of non-homologous end joining, found in Rattus norvegicus (Rat).